Consider the following 133-residue polypeptide: Small ribosomal subunit protein uS8c (133 aa).

This sequence belongs to the universal ribosomal protein uS8 family. Part of the 30S ribosomal subunit.

The protein resides in the plastid. It is found in the chloroplast. One of the primary rRNA binding proteins, it binds directly to 16S rRNA central domain where it helps coordinate assembly of the platform of the 30S subunit. The protein is Small ribosomal subunit protein uS8c (rps8) of Mesostigma viride (Green alga).